We begin with the raw amino-acid sequence, 350 residues long: Glycosyltransferase 8 domain-containing protein 2 (350 aa).

Residues 1–6 (MALLRK) are Cytoplasmic-facing. The helical; Signal-anchor for type II membrane protein transmembrane segment at 7–24 (INQVLLFLLIVTLCGILY) threads the bilayer. The Lumenal portion of the chain corresponds to 25–349 (KKVHKGTMLR…AGIFKLHHPN (325 aa)). Asn-234 carries N-linked (GlcNAc...) asparagine glycosylation.

It belongs to the glycosyltransferase 8 family.

The protein localises to the membrane. The chain is Glycosyltransferase 8 domain-containing protein 2 (GLT8D2) from Bos taurus (Bovine).